The following is a 102-amino-acid chain: Small ribosomal subunit protein eS24 (102 aa).

The protein belongs to the eukaryotic ribosomal protein eS24 family.

This is Small ribosomal subunit protein eS24 from Methanococcus aeolicus (strain ATCC BAA-1280 / DSM 17508 / OCM 812 / Nankai-3).